Here is a 1414-residue protein sequence, read N- to C-terminus: DNA-directed RNA polymerase subunit beta' (1414 aa).

Zn(2+) contacts are provided by Cys70, Cys72, Cys85, and Cys88. Asp460, Asp462, and Asp464 together coordinate Mg(2+). Cys815, Cys889, Cys896, and Cys899 together coordinate Zn(2+). Positions 1395–1414 (EAEAQFADVSSTPDSDTDAS) are disordered.

Belongs to the RNA polymerase beta' chain family. As to quaternary structure, the RNAP catalytic core consists of 2 alpha, 1 beta, 1 beta' and 1 omega subunit. When a sigma factor is associated with the core the holoenzyme is formed, which can initiate transcription. Mg(2+) is required as a cofactor. It depends on Zn(2+) as a cofactor.

It catalyses the reaction RNA(n) + a ribonucleoside 5'-triphosphate = RNA(n+1) + diphosphate. In terms of biological role, DNA-dependent RNA polymerase catalyzes the transcription of DNA into RNA using the four ribonucleoside triphosphates as substrates. The chain is DNA-directed RNA polymerase subunit beta' from Janthinobacterium sp. (strain Marseille) (Minibacterium massiliensis).